A 261-amino-acid polypeptide reads, in one-letter code: Enolase-phosphatase E1 (261 aa).

The Mg(2+) site is built by aspartate 16 and glutamate 18. Residues 153 to 154 (SS) and lysine 187 contribute to the substrate site. Aspartate 212 lines the Mg(2+) pocket.

It belongs to the HAD-like hydrolase superfamily. MasA/MtnC family. As to quaternary structure, monomer. Mg(2+) serves as cofactor.

The protein localises to the cytoplasm. The protein resides in the nucleus. The catalysed reaction is 5-methylsulfanyl-2,3-dioxopentyl phosphate + H2O = 1,2-dihydroxy-5-(methylsulfanyl)pent-1-en-3-one + phosphate. It participates in amino-acid biosynthesis; L-methionine biosynthesis via salvage pathway; L-methionine from S-methyl-5-thio-alpha-D-ribose 1-phosphate: step 3/6. The protein operates within amino-acid biosynthesis; L-methionine biosynthesis via salvage pathway; L-methionine from S-methyl-5-thio-alpha-D-ribose 1-phosphate: step 4/6. Bifunctional enzyme that catalyzes the enolization of 2,3-diketo-5-methylthiopentyl-1-phosphate (DK-MTP-1-P) into the intermediate 2-hydroxy-3-keto-5-methylthiopentenyl-1-phosphate (HK-MTPenyl-1-P), which is then dephosphorylated to form the acireductone 1,2-dihydroxy-3-keto-5-methylthiopentene (DHK-MTPene). In Danio rerio (Zebrafish), this protein is Enolase-phosphatase E1 (enoph1).